Consider the following 501-residue polypeptide: Bifunctional purine biosynthesis protein PurH (501 aa).

The MGS-like domain occupies 1–144; that stretch reads MKKRALISVF…KNFKDVVVLS (144 aa).

Belongs to the PurH family.

The catalysed reaction is (6R)-10-formyltetrahydrofolate + 5-amino-1-(5-phospho-beta-D-ribosyl)imidazole-4-carboxamide = 5-formamido-1-(5-phospho-D-ribosyl)imidazole-4-carboxamide + (6S)-5,6,7,8-tetrahydrofolate. It carries out the reaction IMP + H2O = 5-formamido-1-(5-phospho-D-ribosyl)imidazole-4-carboxamide. The protein operates within purine metabolism; IMP biosynthesis via de novo pathway; 5-formamido-1-(5-phospho-D-ribosyl)imidazole-4-carboxamide from 5-amino-1-(5-phospho-D-ribosyl)imidazole-4-carboxamide (10-formyl THF route): step 1/1. Its pathway is purine metabolism; IMP biosynthesis via de novo pathway; IMP from 5-formamido-1-(5-phospho-D-ribosyl)imidazole-4-carboxamide: step 1/1. The protein is Bifunctional purine biosynthesis protein PurH of Clostridium perfringens (strain ATCC 13124 / DSM 756 / JCM 1290 / NCIMB 6125 / NCTC 8237 / Type A).